Here is a 346-residue protein sequence, read N- to C-terminus: Glycerol-1-phosphate dehydrogenase [NAD(P)+] (346 aa).

NAD(+) contacts are provided by residues Gly-93–Asp-97 and Thr-115–Ser-118. Substrate is bound at residue Asp-120. Position 124 (Ser-124) interacts with NAD(+). Substrate is bound at residue Asp-167. Asp-167 and His-247 together coordinate Zn(2+). Residue His-251 participates in substrate binding. Residue His-263 coordinates Zn(2+).

It belongs to the glycerol-1-phosphate dehydrogenase family. The cofactor is Zn(2+).

It is found in the cytoplasm. The enzyme catalyses sn-glycerol 1-phosphate + NAD(+) = dihydroxyacetone phosphate + NADH + H(+). It carries out the reaction sn-glycerol 1-phosphate + NADP(+) = dihydroxyacetone phosphate + NADPH + H(+). Its pathway is membrane lipid metabolism; glycerophospholipid metabolism. Catalyzes the NAD(P)H-dependent reduction of dihydroxyacetonephosphate (DHAP or glycerone phosphate) to glycerol 1-phosphate (G1P). The G1P thus generated is used as the glycerophosphate backbone of phospholipids in the cellular membranes of Archaea. In Pyrococcus furiosus (strain ATCC 43587 / DSM 3638 / JCM 8422 / Vc1), this protein is Glycerol-1-phosphate dehydrogenase [NAD(P)+].